We begin with the raw amino-acid sequence, 138 residues long: MALHIHEACILLLVIPGLVTSAAISHEDYPADEGDQISSNDNLIFDDYRGKGCVDDSGFVYKLGERFFPGHSNCPCVCALDGPVCDQPECPKIHPKCTKVEHNGCCPECKEVKNFCEYHGKNYKILEEFKVCVTLHTY.

An N-terminal signal peptide occupies residues 1–21; it reads MALHIHEACILLLVIPGLVTS. Residues 51-110 enclose the VWFC domain; it reads KGCVDDSGFVYKLGERFFPGHSNCPCVCALDGPVCDQPECPKIHPKCTKVEHNGCCPECK.

In terms of assembly, peripherally associated with AMPAR complex. AMPAR complex consists of an inner core made of 4 pore-forming GluA/GRIA proteins (GRIA1, GRIA2, GRIA3 and GRIA4) and 4 major auxiliary subunits arranged in a twofold symmetry. One of the two pairs of distinct binding sites is occupied either by CNIH2, CNIH3 or CACNG2, CACNG3. The other harbors CACNG2, CACNG3, CACNG4, CACNG8 or GSG1L. This inner core of AMPAR complex is complemented by outer core constituents binding directly to the GluA/GRIA proteins at sites distinct from the interaction sites of the inner core constituents. Outer core constituents include at least PRRT1, PRRT2, CKAMP44/SHISA9, FRRS1L and NRN1. The proteins of the inner and outer core serve as a platform for other, more peripherally associated AMPAR constituents, including VWC2L. Alone or in combination, these auxiliary subunits control the gating and pharmacology of the AMPAR complex and profoundly impact their biogenesis and protein processing.

The protein resides in the secreted. The protein localises to the synapse. Functionally, may play a role in neurogenesis. May play a role in bone differentiation and matrix mineralization. This chain is von Willebrand factor C domain-containing protein 2-like (VWC2L), found in Macaca fascicularis (Crab-eating macaque).